A 522-amino-acid polypeptide reads, in one-letter code: Glucose-6-phosphate isomerase (522 aa).

The Proton donor role is filled by Glu351. Active-site residues include His382 and Lys491.

The protein belongs to the GPI family.

It localises to the cytoplasm. It catalyses the reaction alpha-D-glucose 6-phosphate = beta-D-fructose 6-phosphate. The protein operates within carbohydrate biosynthesis; gluconeogenesis. Its pathway is carbohydrate degradation; glycolysis; D-glyceraldehyde 3-phosphate and glycerone phosphate from D-glucose: step 2/4. Functionally, catalyzes the reversible isomerization of glucose-6-phosphate to fructose-6-phosphate. The chain is Glucose-6-phosphate isomerase from Albidiferax ferrireducens (strain ATCC BAA-621 / DSM 15236 / T118) (Rhodoferax ferrireducens).